The following is a 629-amino-acid chain: Methyl-accepting chemotaxis protein PscA (629 aa).

Topologically, residues 1-9 (MKNLGFSKK) are cytoplasmic. The helical transmembrane segment at 10–30 (ILLAAALIVVVAFSVFIVIND) threads the bilayer. Residues 31–276 (YRQRQSLKSS…AYAMLTEFRT (246 aa)) are Periplasmic-facing. One can recognise a Cache domain in the interval 36–258 (SLKSSVKSEL…QGVATANWYV (223 aa)). The chain crosses the membrane as a helical span at residues 277 to 297 (SAITAMVVVVMVIILLLGPLI). The 55-residue stretch at 298 to 352 (RVLMQPLHQMGRAMRDIADGEGDLTKRLAITSHDEFGALAESFNHFVERIHTSIR) folds into the HAMP domain. At 298 to 629 (RVLMQPLHQM…LQQLVGSFRI (332 aa)) the chain is on the cytoplasmic side. The Methyl-accepting transducer domain occupies 357-593 (TAAQLGEVAT…SINVDITHIN (237 aa)).

Belongs to the methyl-accepting chemotaxis (MCP) protein family.

Its subcellular location is the cell inner membrane. Its function is as follows. Chemotactic-signal transducers respond to changes in the concentration of attractants and repellents in the environment, transduce a signal from the outside to the inside of the cell, and facilitate sensory adaptation through the variation of the level of methylation. PscA recognizes specifically and with high affinity L-Asp, D-Asp and L-Glu. It exerts a double function, in mediating chemotaxis to these amino acids and in modulating cyclic di-GMP (c-di-GMP) levels, causing alterations in biofilm development. Plays a key role in the infection process. It may facilitate bacterial entry into the plant. This chain is Methyl-accepting chemotaxis protein PscA, found in Pseudomonas syringae pv. tomato (strain ATCC BAA-871 / DC3000).